The primary structure comprises 113 residues: uncharacterized protein (113 aa).

This is an uncharacterized protein from Schizosaccharomyces pombe (strain 972 / ATCC 24843) (Fission yeast).